We begin with the raw amino-acid sequence, 156 residues long: Lipoprotein signal peptidase (156 aa).

A run of 3 helical transmembrane segments spans residues 5 to 25, 64 to 84, and 89 to 109; these read FKFI…DQWV, YLHL…RTLL, and IAFG…FIHG. Active-site residues include aspartate 113 and aspartate 130. The helical transmembrane segment at 122 to 142 threads the bilayer; that stretch reads NFAIFNVADVMINISVALILI.

This sequence belongs to the peptidase A8 family.

It localises to the cell inner membrane. It carries out the reaction Release of signal peptides from bacterial membrane prolipoproteins. Hydrolyzes -Xaa-Yaa-Zaa-|-(S,diacylglyceryl)Cys-, in which Xaa is hydrophobic (preferably Leu), and Yaa (Ala or Ser) and Zaa (Gly or Ala) have small, neutral side chains.. It participates in protein modification; lipoprotein biosynthesis (signal peptide cleavage). Its function is as follows. This protein specifically catalyzes the removal of signal peptides from prolipoproteins. The protein is Lipoprotein signal peptidase of Campylobacter jejuni subsp. jejuni serotype O:2 (strain ATCC 700819 / NCTC 11168).